Consider the following 116-residue polypeptide: Large ribosomal subunit protein bL20 (116 aa).

It belongs to the bacterial ribosomal protein bL20 family.

Its function is as follows. Binds directly to 23S ribosomal RNA and is necessary for the in vitro assembly process of the 50S ribosomal subunit. It is not involved in the protein synthesizing functions of that subunit. The sequence is that of Large ribosomal subunit protein bL20 from Mycoplasmopsis synoviae (strain 53) (Mycoplasma synoviae).